A 519-amino-acid chain; its full sequence is ATP synthase subunit beta, mitochondrial (519 aa).

ATP is bound at residue 195–202; that stretch reads GGAGVGKT.

This sequence belongs to the ATPase alpha/beta chains family. In terms of assembly, F-type ATPases have 2 components, CF(1) - the catalytic core - and CF(0) - the membrane proton channel. CF(1) has five subunits: alpha(3), beta(3), gamma(1), delta(1), epsilon(1). CF(0) has three main subunits: a, b and c.

It is found in the mitochondrion. It localises to the mitochondrion inner membrane. The catalysed reaction is ATP + H2O + 4 H(+)(in) = ADP + phosphate + 5 H(+)(out). Mitochondrial membrane ATP synthase (F(1)F(0) ATP synthase or Complex V) produces ATP from ADP in the presence of a proton gradient across the membrane which is generated by electron transport complexes of the respiratory chain. F-type ATPases consist of two structural domains, F(1) - containing the extramembraneous catalytic core, and F(0) - containing the membrane proton channel, linked together by a central stalk and a peripheral stalk. During catalysis, ATP synthesis in the catalytic domain of F(1) is coupled via a rotary mechanism of the central stalk subunits to proton translocation. Subunits alpha and beta form the catalytic core in F(1). Rotation of the central stalk against the surrounding alpha(3)beta(3) subunits leads to hydrolysis of ATP in three separate catalytic sites on the beta subunits. The polypeptide is ATP synthase subunit beta, mitochondrial (atp-2) (Neurospora crassa (strain ATCC 24698 / 74-OR23-1A / CBS 708.71 / DSM 1257 / FGSC 987)).